The sequence spans 267 residues: 3-deoxy-manno-octulosonate cytidylyltransferase 2 (267 aa).

This sequence belongs to the KdsB family.

Its subcellular location is the cytoplasm. It catalyses the reaction 3-deoxy-alpha-D-manno-oct-2-ulosonate + CTP = CMP-3-deoxy-beta-D-manno-octulosonate + diphosphate. The protein operates within nucleotide-sugar biosynthesis; CMP-3-deoxy-D-manno-octulosonate biosynthesis; CMP-3-deoxy-D-manno-octulosonate from 3-deoxy-D-manno-octulosonate and CTP: step 1/1. It participates in bacterial outer membrane biogenesis; lipopolysaccharide biosynthesis. Its function is as follows. Activates KDO (a required 8-carbon sugar) for incorporation into bacterial lipopolysaccharide in Gram-negative bacteria. The protein is 3-deoxy-manno-octulosonate cytidylyltransferase 2 of Burkholderia ambifaria (strain MC40-6).